Here is a 201-residue protein sequence, read N- to C-terminus: 3-isopropylmalate dehydratase small subunit (201 aa).

Belongs to the LeuD family. LeuD type 1 subfamily. As to quaternary structure, heterodimer of LeuC and LeuD.

The enzyme catalyses (2R,3S)-3-isopropylmalate = (2S)-2-isopropylmalate. It functions in the pathway amino-acid biosynthesis; L-leucine biosynthesis; L-leucine from 3-methyl-2-oxobutanoate: step 2/4. Its function is as follows. Catalyzes the isomerization between 2-isopropylmalate and 3-isopropylmalate, via the formation of 2-isopropylmaleate. This chain is 3-isopropylmalate dehydratase small subunit, found in Roseobacter denitrificans (strain ATCC 33942 / OCh 114) (Erythrobacter sp. (strain OCh 114)).